The primary structure comprises 99 residues: Large ribosomal subunit protein uL23 (99 aa).

This sequence belongs to the universal ribosomal protein uL23 family. Part of the 50S ribosomal subunit. Contacts protein L29, and trigger factor when it is bound to the ribosome.

One of the early assembly proteins it binds 23S rRNA. One of the proteins that surrounds the polypeptide exit tunnel on the outside of the ribosome. Forms the main docking site for trigger factor binding to the ribosome. This chain is Large ribosomal subunit protein uL23, found in Leifsonia xyli subsp. xyli (strain CTCB07).